A 105-amino-acid chain; its full sequence is BLOC-1-related complex subunit 7 (105 aa).

This sequence belongs to the BORCS7 family. Component of the BLOC-one-related complex (BORC) which is composed of BLOC1S1, BLOC1S2, BORCS5, BORCS6, BORCS7, BORCS8, KXD1 and SNAPIN.

The protein resides in the lysosome membrane. In terms of biological role, as part of the BORC complex may play a role in lysosomes movement and localization at the cell periphery. Associated with the cytosolic face of lysosomes, the BORC complex may recruit ARL8B and couple lysosomes to microtubule plus-end-directed kinesin motor. This Bos taurus (Bovine) protein is BLOC-1-related complex subunit 7.